We begin with the raw amino-acid sequence, 840 residues long: N-acetyltransferase ESCO1 (840 aa).

Residues 1–25 (MMSIQEKSKENSSKVTKKSDDKNSE) show a composition bias toward basic and acidic residues. The disordered stretch occupies residues 1-188 (MMSIQEKSKE…VLEVKSDSKE (188 aa)). 3 stretches are compositionally biased toward polar residues: residues 46 to 58 (KSQA…SKIN), 65 to 74 (RMSTRSSKAA), and 81 to 96 (KSIN…YSQE). Basic and acidic residues predominate over residues 131–140 (VSRRSLRSRE). Polar residues predominate over residues 141–153 (IQGQVQAVKQSLP). Residues 161 to 170 (SSTQSKSNKT) show a composition bias toward low complexity. Positions 178–188 (KVLEVKSDSKE) are enriched in basic and acidic residues. Serine 200 carries the post-translational modification Phosphoserine. 2 disordered regions span residues 221–300 (TQGS…KSKR) and 318–338 (NVEV…KPTE). A compositionally biased stretch (polar residues) spans 267–278 (HTQVNTNTTLPK). The span at 319–338 (VEVKKESSQMESVKEEKPTE) shows a compositional bias: basic and acidic residues. Residue lysine 332 forms a Glycyl lysine isopeptide (Lys-Gly) (interchain with G-Cter in SUMO2) linkage. Serine 412 carries the phosphoserine modification. Disordered stretches follow at residues 486–505 (ANEI…HSFD) and 542–582 (TGEN…KCNS). A compositionally biased stretch (polar residues) spans 551–565 (APQQHSILSNQTSKS). A CCHH-type zinc finger spans residues 617–641 (VSCNVCGMLYTASNPEDETQHLLFH). Acetyl-CoA-binding positions include 772 to 774 (IWV), 780 to 785 (RKKIAS), and 812 to 814 (TPD).

The protein belongs to the acetyltransferase family. ECO subfamily. The subunit structure is controversial. Monomer. Homodimer. Phosphorylated during mitosis, when associated with chromosomes. As to expression, widely expressed. Expressed in heart, brain, liver, placenta, lung, kidney and pancreas. Highly expressed in muscle.

It is found in the nucleus. The protein resides in the chromosome. The enzyme catalyses L-lysyl-[protein] + acetyl-CoA = N(6)-acetyl-L-lysyl-[protein] + CoA + H(+). Acetyltransferase required for the establishment of sister chromatid cohesion. Couples the processes of cohesion and DNA replication to ensure that only sister chromatids become paired together. In contrast to the structural cohesins, the deposition and establishment factors are required only during S phase. Acts by mediating the acetylation of cohesin component SMC3. This is N-acetyltransferase ESCO1 (ESCO1) from Homo sapiens (Human).